The following is a 323-amino-acid chain: MARVEKPRKVILVGDGAVGSTFAFSMVQQGIAEELGIIDIAKEHVEGDAIDLADATPWTFPKNIYAADYADCKDADLVVITAGAPQKPGETRLDLVNKNLKILSSIVEPVVESGFEGIFLVVANPVDILTHATWKISGFPKDRVIGSGTSLDTGRLQKVIGKMEHVDPRSVNAYMLGEHGDTEFPVWSYNNVGGVKVSDWVKAHGMDESKLEEIHKEVADMAYDIINKKGATFYGIGTASAMIAKAILNDEHRVLPLSVAMDGQYGLHDLHIGTPAVVGRNGLEQIIEMPLTADEQAKMEASAKQLKEVMDKAFEETGVKVRQ.

NAD(+) contacts are provided by residues Val-18, Asp-39, Tyr-69, and 83-84 (GA). 2 residues coordinate substrate: Gln-86 and Arg-92. NAD(+) contacts are provided by residues Ser-105, 122 to 124 (VAN), and Ser-147. 124-127 (NPVD) provides a ligand contact to substrate. 152-155 (DTGR) is a substrate binding site. Catalysis depends on His-179, which acts as the Proton acceptor. Residue Tyr-223 is modified to Phosphotyrosine. A substrate-binding site is contributed by Thr-232.

This sequence belongs to the LDH/MDH superfamily. LDH family. In terms of assembly, homotetramer.

The protein resides in the cytoplasm. The catalysed reaction is (S)-lactate + NAD(+) = pyruvate + NADH + H(+). The protein operates within fermentation; pyruvate fermentation to lactate; (S)-lactate from pyruvate: step 1/1. Its function is as follows. Catalyzes the conversion of lactate to pyruvate. The protein is L-lactate dehydrogenase 1 of Lactobacillus acidophilus (strain ATCC 700396 / NCK56 / N2 / NCFM).